The following is a 642-amino-acid chain: Threonine--tRNA ligase (642 aa).

Positions 1-61 (MPIITLPDGS…EHDASLEIIT (61 aa)) constitute a TGS domain. The interval 244–535 (DHRKIGKQLD…LIEEYAGFFP (292 aa)) is catalytic. Zn(2+) contacts are provided by cysteine 335, histidine 386, and histidine 512.

The protein belongs to the class-II aminoacyl-tRNA synthetase family. As to quaternary structure, homodimer. Requires Zn(2+) as cofactor.

It localises to the cytoplasm. The catalysed reaction is tRNA(Thr) + L-threonine + ATP = L-threonyl-tRNA(Thr) + AMP + diphosphate + H(+). Catalyzes the attachment of threonine to tRNA(Thr) in a two-step reaction: L-threonine is first activated by ATP to form Thr-AMP and then transferred to the acceptor end of tRNA(Thr). Also edits incorrectly charged L-seryl-tRNA(Thr). This chain is Threonine--tRNA ligase, found in Vibrio cholerae serotype O1 (strain M66-2).